A 224-amino-acid polypeptide reads, in one-letter code: Tumor protein D52 (224 aa).

Ser-36 and Ser-40 each carry phosphoserine. A coiled-coil region spans residues 62–114; sequence AATISATETLSEEEQEELRRELAKVEEEIQTLSQVLAAKEKHLAEIKRKLGIN. Ser-176 is subject to Phosphoserine. The tract at residues 187-224 is disordered; the sequence is KVGGTKPAGGDFGEVLNSAANASATTTEPLPEKTQESL. Residues 203–213 are compositionally biased toward low complexity; the sequence is NSAANASATTT. Ser-223 bears the Phosphoserine mark.

Belongs to the TPD52 family. As to quaternary structure, forms a homodimer or heterodimer with other members of the family. All isoforms interact with several 14-3-3 proteins. In terms of tissue distribution, isoform 2 is expressed in colon, breast, prostate, pancreas and kidney tumor cell lines. Isoform 2 is expressed at high levels in kidney, prostate, brain, small intestine and pancreas, at moderate levels in placenta and colon, at low levels in lung, liver and heart, and at very low levels in spleen, thymus, peripheral mononuclear blood cells, testis and ovary.

In Homo sapiens (Human), this protein is Tumor protein D52 (TPD52).